The following is a 268-amino-acid chain: NAC domain-containing protein 41 (268 aa).

The 146-residue stretch at Leu15–Lys160 folds into the NAC domain. A DNA-binding region spans residues Val109–Asn166. The interval Asn166–Glu190 is disordered. A compositionally biased stretch (basic and acidic residues) spans Glu180–Glu190.

It is found in the nucleus. Transcription activator of the mannan synthase CSLA9. Recognizes and binds to DNA-specific sequence of CSLA9 promoter. This chain is NAC domain-containing protein 41, found in Arabidopsis thaliana (Mouse-ear cress).